A 367-amino-acid polypeptide reads, in one-letter code: Peptide chain release factor 1 (367 aa).

Q243 carries the N5-methylglutamine modification.

It belongs to the prokaryotic/mitochondrial release factor family. In terms of processing, methylated by PrmC. Methylation increases the termination efficiency of RF1.

Its subcellular location is the cytoplasm. Functionally, peptide chain release factor 1 directs the termination of translation in response to the peptide chain termination codons UAG and UAA. The chain is Peptide chain release factor 1 from Acidovorax ebreus (strain TPSY) (Diaphorobacter sp. (strain TPSY)).